The chain runs to 198 residues: MSAMMVKLGLNKSALLLKPSAFSRAAALSSSRRLLFNTARTNFLSTSPLKNVASEMNTKAAIAEEQILNKQRAKRPISPHLTIYQPQLTWYLSSLHRISLVLMGLGFYLFTILFGVSGLLGLGLTTEKVSNWYHQKFSKITEWSIKGSFAYLFAIHYGGAIRHLIWDTAKELTLKGVYRTGYALIGFTAVLGTYLLTL.

Residues Met1 to Lys50 constitute a mitochondrion transit peptide. Over Asn51–Ser99 the chain is Mitochondrial matrix. Positions 93 and 97 each coordinate a ubiquinone. A helical membrane pass occupies residues Leu100–Leu120. Residues Gly121–Lys139 are Mitochondrial intermembrane-facing. A helical transmembrane segment spans residues Ile140 to Ala160. Heme is bound at residue His156. The Mitochondrial matrix segment spans residues Ile161 to Lys175. The helical transmembrane segment at Gly176–Leu196 threads the bilayer. Residues Thr197 to Leu198 lie on the Mitochondrial intermembrane side of the membrane.

This sequence belongs to the cytochrome b560 family. As to quaternary structure, forms part of complex II containing four subunits: a flavoprotein (FP), an iron-sulfur protein (IP) and a cytochrome b composed of two integral membrane proteins. Heme serves as cofactor.

It localises to the mitochondrion inner membrane. It participates in carbohydrate metabolism; tricarboxylic acid cycle. Its function is as follows. Membrane-anchoring mono-heme cytochrome b subunit of succinate dehydrogenase (SDH) that is involved in system II of the mitochondrial electron transport chain and is responsible for transferring electrons from succinate to ubiquinone (coenzyme Q). SDH3 and SDH4 form the membrane dimer that anchors the catalytic dimer formed by SDH1 and SDH2 to the matrix surface of the mitochondrial inner membrane. Electrons originating from the catalytic dimer enter the membrane dimer for ubiquinone reduction. This Saccharomyces cerevisiae (strain ATCC 204508 / S288c) (Baker's yeast) protein is Succinate dehydrogenase [ubiquinone] cytochrome b subunit, mitochondrial (SDH3).